Reading from the N-terminus, the 271-residue chain is uncharacterized protein (271 aa).

3 helical membrane-spanning segments follow: residues 11-33 (GWLALALVVVAFTYLCFTVLAPW), 172-194 (SINTGQVAALTGVQLAGSYLQLI), and 214-236 (FLSYGIQWISFGILAPIGLGYFA). The segment at 245–271 (REKAGSPPPDKPMTVEQKLADRYGRRR) is disordered. Residues 262-271 (KLADRYGRRR) show a composition bias toward basic and acidic residues.

This sequence belongs to the SURF1 family.

The protein localises to the cell membrane. This is an uncharacterized protein from Mycobacterium tuberculosis (strain CDC 1551 / Oshkosh).